Consider the following 578-residue polypeptide: Arginine--tRNA ligase (578 aa).

The 'HIGH' region signature appears at 127–137; that stretch reads PNLAKEMHVGH.

It belongs to the class-I aminoacyl-tRNA synthetase family. Monomer.

The protein resides in the cytoplasm. It carries out the reaction tRNA(Arg) + L-arginine + ATP = L-arginyl-tRNA(Arg) + AMP + diphosphate. The sequence is that of Arginine--tRNA ligase from Pseudomonas putida (strain ATCC 700007 / DSM 6899 / JCM 31910 / BCRC 17059 / LMG 24140 / F1).